The primary structure comprises 134 residues: Small ribosomal subunit protein uS8c (134 aa).

The protein belongs to the universal ribosomal protein uS8 family. In terms of assembly, part of the 30S ribosomal subunit.

Its subcellular location is the plastid. It localises to the chloroplast. In terms of biological role, one of the primary rRNA binding proteins, it binds directly to 16S rRNA central domain where it helps coordinate assembly of the platform of the 30S subunit. This Coffea arabica (Arabian coffee) protein is Small ribosomal subunit protein uS8c (rps8).